A 371-amino-acid polypeptide reads, in one-letter code: Glutamate 5-kinase (371 aa).

Lys11 serves as a coordination point for ATP. Ser52, Asp139, and Asn151 together coordinate substrate. ATP-binding positions include 171–172 (TD) and 213–219 (TGGMATK). The region spanning 278–356 (EGSLTLDEGA…AEIPRILGYE (79 aa)) is the PUA domain.

The protein belongs to the glutamate 5-kinase family.

The protein localises to the cytoplasm. It carries out the reaction L-glutamate + ATP = L-glutamyl 5-phosphate + ADP. Its pathway is amino-acid biosynthesis; L-proline biosynthesis; L-glutamate 5-semialdehyde from L-glutamate: step 1/2. Functionally, catalyzes the transfer of a phosphate group to glutamate to form L-glutamate 5-phosphate. This is Glutamate 5-kinase from Synechococcus sp. (strain JA-2-3B'a(2-13)) (Cyanobacteria bacterium Yellowstone B-Prime).